Reading from the N-terminus, the 214-residue chain is Metalloproteinase inhibitor 3 (214 aa).

Positions 1-26 (MSVCALTLILGCFLLFLGDISKPAEG) are cleaved as a signal peptide. Position 27 (C27) interacts with Zn(2+). Involved in metalloproteinase-binding regions lie at residues 27–30 (CTCA) and 91–92 (ES). Intrachain disulfides connect C27–C94, C29–C121, C39–C146, C148–C195, C153–C158, and C166–C187. The NTR domain occupies 27-146 (CTCAPSHPQD…GLNHRYPLGC (120 aa)).

The protein belongs to the protease inhibitor I35 (TIMP) family.

It is found in the secreted. The protein resides in the extracellular space. It localises to the extracellular matrix. In terms of biological role, complexes with metalloproteinases (such as collagenases) and irreversibly inactivates them by binding to their catalytic zinc cofactor. May form part of a tissue-specific acute response to remodeling stimuli. The polypeptide is Metalloproteinase inhibitor 3 (timp3) (Xenopus laevis (African clawed frog)).